Here is a 42-residue protein sequence, read N- to C-terminus: Beta-defensin 13 (42 aa).

3 disulfides stabilise this stretch: cysteine 9-cysteine 38, cysteine 16-cysteine 31, and cysteine 21-cysteine 39.

It belongs to the beta-defensin family. As to expression, neutrophilic granules.

Its subcellular location is the secreted. Its function is as follows. Has bactericidal activity. Active against E.coli ML35 and S.aureus 502A. The polypeptide is Beta-defensin 13 (DEFB13) (Bos taurus (Bovine)).